Reading from the N-terminus, the 333-residue chain is tRNA U34 carboxymethyltransferase (333 aa).

Residues Lys-97, Trp-111, Lys-116, Gly-136, 158-160, 189-190, Met-205, Tyr-209, and Arg-324 contribute to the carboxy-S-adenosyl-L-methionine site; these read DPS and IE.

This sequence belongs to the class I-like SAM-binding methyltransferase superfamily. CmoB family. Homotetramer.

It carries out the reaction carboxy-S-adenosyl-L-methionine + 5-hydroxyuridine(34) in tRNA = 5-carboxymethoxyuridine(34) in tRNA + S-adenosyl-L-homocysteine + H(+). Catalyzes carboxymethyl transfer from carboxy-S-adenosyl-L-methionine (Cx-SAM) to 5-hydroxyuridine (ho5U) to form 5-carboxymethoxyuridine (cmo5U) at position 34 in tRNAs. The sequence is that of tRNA U34 carboxymethyltransferase from Chromohalobacter salexigens (strain ATCC BAA-138 / DSM 3043 / CIP 106854 / NCIMB 13768 / 1H11).